We begin with the raw amino-acid sequence, 405 residues long: L-rhamnonate dehydratase (405 aa).

Positions 33 and 59 each coordinate substrate. Mg(2+) is bound by residues Asp-226, Glu-252, and Glu-280. The active-site Proton acceptor is His-329. Residue Glu-349 coordinates substrate.

It belongs to the mandelate racemase/muconate lactonizing enzyme family. RhamD subfamily. As to quaternary structure, homooctamer; tetramer of dimers. Mg(2+) is required as a cofactor.

It catalyses the reaction L-rhamnonate = 2-dehydro-3-deoxy-L-rhamnonate + H2O. In terms of biological role, catalyzes the dehydration of L-rhamnonate to 2-keto-3-deoxy-L-rhamnonate (KDR). The protein is L-rhamnonate dehydratase of Escherichia coli (strain SMS-3-5 / SECEC).